We begin with the raw amino-acid sequence, 457 residues long: Adenylosuccinate synthetase isozyme 1 (457 aa).

The disordered stretch occupies residues M1–R21. GTP contacts are provided by residues G42–K48 and G70–T72. D43 functions as the Proton acceptor in the catalytic mechanism. Residues D43 and G70 each contribute to the Mg(2+) site. D43 lines the substrate pocket. IMP is bound by residues D43–K46, N68–H71, T163, R177, N256, T271, and R335. H71 acts as the Proton donor in catalysis. V331–R337 lines the substrate pocket. Residues R337, K363–D365, and G445–K448 contribute to the GTP site.

It belongs to the adenylosuccinate synthetase family. As to quaternary structure, homodimer. Mg(2+) serves as cofactor. As to expression, predominantly expressed in skeletal muscle and heart, as well as in several hematopoietic cell lines and solid tumors.

The protein localises to the cytoplasm. It carries out the reaction IMP + L-aspartate + GTP = N(6)-(1,2-dicarboxyethyl)-AMP + GDP + phosphate + 2 H(+). Its pathway is purine metabolism; AMP biosynthesis via de novo pathway; AMP from IMP: step 1/2. Its function is as follows. Component of the purine nucleotide cycle (PNC), which interconverts IMP and AMP to regulate the nucleotide levels in various tissues, and which contributes to glycolysis and ammoniagenesis. Catalyzes the first committed step in the biosynthesis of AMP from IMP. The polypeptide is Adenylosuccinate synthetase isozyme 1 (Homo sapiens (Human)).